The sequence spans 424 residues: Omega-6 fatty acid desaturase, chloroplastic (424 aa).

Residues 1 to 63 (MACTLADSLL…TRNKVTVIHA (63 aa)) constitute a chloroplast transit peptide. Valine 64 is subject to N-acetylvaline. Residues 165–169 (HDCAH) carry the Histidine box-1 motif. The Histidine box-2 signature appears at 201-205 (HDRHH). Residues 361–365 (HIPHH) carry the Histidine box-3 motif.

This sequence belongs to the fatty acid desaturase type 1 family.

The protein resides in the plastid. Its subcellular location is the chloroplast membrane. The catalysed reaction is a (9Z)-octadecenoyl-containing glycerolipid + 2 reduced [2Fe-2S]-[ferredoxin] + O2 + 2 H(+) = a (9Z,12Z)-octadecadienoyl-containing glycerolipid + 2 oxidized [2Fe-2S]-[ferredoxin] + 2 H2O. It functions in the pathway lipid metabolism; polyunsaturated fatty acid biosynthesis. Functionally, chloroplast omega-6 fatty acid desaturase introduces the second double bond in the biosynthesis of 16:3 and 18:3 fatty acids, important constituents of plant membranes. It is thought to use ferredoxin as an electron donor and to act on fatty acids esterified to galactolipids, sulfolipids and phosphatidylglycerol. This Glycine max (Soybean) protein is Omega-6 fatty acid desaturase, chloroplastic.